Here is a 590-residue protein sequence, read N- to C-terminus: uncharacterized protein (590 aa).

2 disordered regions span residues 306-329 (IAEP…GIPY) and 528-590 (QPAP…LMNL). The segment covering 543-563 (PSLPQPVPEPLAPQEPPPPGT) has biased composition (pro residues).

This is an uncharacterized protein from Ictaluridae (bullhead catfishes).